Reading from the N-terminus, the 500-residue chain is MSYFPWLTILVVLPIFAGSLIFFLPHKGNKVVRWYTISICLLEFLLMTYAFCYHFQLEDPLIQLKEDYKWIDVFDFHWRLGIDGLSLGSILLTGFITTLATLAAWPITRNSRLFYFLMLAMYSGQIGLFSSRDLLLFFIMWELELIPVYLLLSMWGGKRRLYSATKFILYTAGGSIFFLIGVLGMGLYGSNEPGLDLERLINQSYPATLEILLYFGFLIAYAVKLPIIPLHTWLPDTHGEAHYSTCMLLAGILLKMGAYGLIRINMELLPHAHYLFSPWLVIIGAIQIIYAASTSLGQRNFKKRIAYSSVSHMGFIIIGIGSITNIGLNGAILQILSHGFIGATLFFLAGTASDRMRLVYLEELGGISIPMPKIFTMFSSFSMASLALPGMSGFVAELVVFFGLITSPKFLLMPKTLITFVMAIGMILTPIYLLSMLRQMFYGYKLFNVPNANFVDSGPRELFILICIFLPVIGIGIYPDFVLSLSVDRVEALLSNYYPK.

Helical transmembrane passes span 4–24 (FPWL…IFFL), 37–57 (ISIC…HFQL), 87–107 (LGSI…AWPI), 113–130 (LFYF…GLFS), 134–154 (LLLF…LLSM), 167–187 (FILY…GMGL), 211–231 (ILLY…IPLH), 242–262 (HYST…YGLI), 272–292 (AHYL…IYAA), 313–333 (MGFI…GAIL), 334–354 (QILS…TASD), 386–406 (LALP…GLIT), 417–437 (LITF…LSML), and 462–482 (LFIL…PDFV).

This sequence belongs to the complex I subunit 4 family.

Its subcellular location is the plastid. The protein localises to the chloroplast thylakoid membrane. It catalyses the reaction a plastoquinone + NADH + (n+1) H(+)(in) = a plastoquinol + NAD(+) + n H(+)(out). The enzyme catalyses a plastoquinone + NADPH + (n+1) H(+)(in) = a plastoquinol + NADP(+) + n H(+)(out). The sequence is that of NAD(P)H-quinone oxidoreductase chain 4, chloroplastic (ndhD) from Triticum aestivum (Wheat).